We begin with the raw amino-acid sequence, 397 residues long: Circumsporozoite protein (397 aa).

Positions 1–18 (MMRKLAILSVSSFLFVEA) are cleaved as a signal peptide. Residues 69–313 (SRSLGENDDG…KNNNNEEPSD (245 aa)) form a disordered region. The interval 85 to 92 (KLRKPKHK) is required for the binding to heparan sulfate proteoglycans (HSPGs) on the surface of host hepatocytes. Positions 93-97 (KLKQP) are region I; contains the proteolytic cleavage site. The segment covering 101–273 (NPDPNANPNV…PNANPNANPN (173 aa)) has biased composition (low complexity). 42 repeat units span residues 105–108 (NANP), 109–112 (NVDP), 113–116 (NANP), 117–120 (NVDP), 121–124 (NANP), 125–128 (NVDP), 129–132 (NANP), 133–136 (NANP), 137–140 (NANP), 141–144 (NANP), 145–148 (NANP), 149–152 (NANP), 153–156 (NANP), 157–160 (NANP), 161–164 (NANP), 165–168 (NANP), 169–172 (NANP), 173–176 (NANP), 177–180 (NANP), 181–184 (NANP), 185–188 (NANP), 189–192 (NANP), 193–196 (NANP), 197–200 (NVDP), 201–204 (NANP), 205–208 (NANP), 209–212 (NANP), 213–216 (NANP), 217–220 (NANP), 221–224 (NANP), 225–228 (NANP), 229–232 (NANP), 233–236 (NANP), 237–240 (NANP), 241–244 (NANP), 245–248 (NANP), 249–252 (NANP), 253–256 (NANP), 257–260 (NANP), 261–264 (NANP), 265–268 (NANP), and 269–272 (NANP). A 42 X 4 AA tandem repeats of N-[AV]-[ND]-P region spans residues 105 to 272 (NANPNVDPNA…NPNANPNANP (168 aa)). The segment covering 274–290 (KNNQGNGQGHNMPNDPN) has biased composition (polar residues). Low complexity predominate over residues 295 to 309 (ENANANSAVKNNNNE). A TSP type-1 domain is found at 322 to 375 (KIQNSLSTEWSPCSVTCGNGIQVRIKPGSANKPKDELDYANDIEKKICKMEKCS). Intrachain disulfides connect C334/C369 and C338/C374. An O-linked (Fuc) threonine glycan is attached at T337. Residue C374 is the site of GPI-anchor amidated cysteine attachment. The propeptide at 375–397 (SSVFNVVNSSIGLIMVLSFLFLN) is removed in mature form.

Belongs to the plasmodium circumsporozoite protein family. During host cell invasion, proteolytically cleaved at the cell membrane in the region I by a papain-like cysteine protease of parasite origin. Cleavage is triggered by the sporozoite contact with highly sulfated heparan sulfate proteoglycans (HSPGs) present on the host hepatocyte cell surface. Cleavage exposes the TSP type-1 (TSR) domain and is required for productive invasion of host hepatocytes but not for adhesion to the host cell membrane. Cleavage is dispensable for sporozoite development in the oocyst, motility and for traversal of host and vector cells. In terms of processing, O-glycosylated; maybe by POFUT2.

It localises to the cell membrane. It is found in the cytoplasm. In terms of biological role, essential sporozoite protein. In the mosquito vector, required for sporozoite development in the oocyst, migration through the vector hemolymph and entry into the vector salivary glands. In the vertebrate host, required for sporozoite migration through the host dermis and infection of host hepatocytes. Binds to highly sulfated heparan sulfate proteoglycans (HSPGs) on the surface of host hepatocytes. Functionally, in the vertebrate host, binds to highly sulfated heparan sulfate proteoglycans (HSPGs) on the surface of host hepatocytes and is required for sporozoite invasion of the host hepatocytes. The protein is Circumsporozoite protein of Plasmodium falciparum (isolate NF54).